The following is a 194-amino-acid chain: Fe/S biogenesis protein NfuA (194 aa).

[4Fe-4S] cluster-binding residues include cysteine 152 and cysteine 155.

The protein belongs to the NfuA family. As to quaternary structure, homodimer. It depends on [4Fe-4S] cluster as a cofactor.

In terms of biological role, involved in iron-sulfur cluster biogenesis. Binds a 4Fe-4S cluster, can transfer this cluster to apoproteins, and thereby intervenes in the maturation of Fe/S proteins. Could also act as a scaffold/chaperone for damaged Fe/S proteins. This Teredinibacter turnerae (strain ATCC 39867 / T7901) protein is Fe/S biogenesis protein NfuA.